The following is a 375-amino-acid chain: Fluoride export protein 2 (375 aa).

Topologically, residues 1–11 (MIFNPVISNHK) are cytoplasmic. The helical transmembrane segment at 12–32 (LSHYIHVFCTFTTFCILGTET) threads the bilayer. Over 33–34 (RQ) the chain is Extracellular. Residues 35-55 (AITALSTYTPAFVTAPTVLWS) traverse the membrane as a helical segment. Topologically, residues 56–79 (NCSSCMLMGIMQSLNAYTWMKDHQ) are cytoplasmic. A helical membrane pass occupies residues 80–100 (VLFLGVTTGYCGALSSFSSML). Residues 101–127 (LEMFEHSTNLTNGNIANHTKLPNRAYG) are Extracellular-facing. 2 N-linked (GlcNAc...) asparagine glycosylation sites follow: Asn109 and Asn117. Residues 128-148 (IMEFLSVLLVHLMVSMGSLIF) form a helical membrane-spanning segment. Residues 149-213 (GRQLGKEVIV…FKKFFDVVDK (65 aa)) lie on the Cytoplasmic side of the membrane. A helical membrane pass occupies residues 214-234 (LAYALAFPLIILFVVLCAYYE). Asn235 is a glycosylation site (N-linked (GlcNAc...) asparagine). At 235–241 (NYSRGKW) the chain is on the extracellular side. The helical transmembrane segment at 242 to 262 (TLPCLFGIFAGFLRYWLAEMF) threads the bilayer. At 263–268 (NKTNKK) the chain is on the cytoplasmic side. Residues 269–289 (FPLGTFLANVFATLLIGIFTM) traverse the membrane as a helical segment. The Extracellular segment spans residues 290-310 (VQRGKKHFSTDIPIVNSLNSC). A helical transmembrane segment spans residues 311–331 (HIVSALISGFCGTLSTISTFI). Residues 332–338 (NEGYKLS) lie on the Cytoplasmic side of the membrane. The helical transmembrane segment at 339 to 359 (FINMLIYYTVSIGISYCLLVI) threads the bilayer. The Extracellular portion of the chain corresponds to 360–375 (TLGSYAWTRGLTNPIC).

The protein belongs to the fluoride channel Fluc/FEX (TC 1.A.43) family.

It is found in the cell membrane. The enzyme catalyses fluoride(in) = fluoride(out). In terms of biological role, fluoride channel required for the rapid expulsion of cytoplasmic fluoride. This Saccharomyces cerevisiae (strain ATCC 204508 / S288c) (Baker's yeast) protein is Fluoride export protein 2.